A 188-amino-acid polypeptide reads, in one-letter code: Myc target protein 1 (188 aa).

A helical transmembrane segment spans residues 24 to 44 (FTVSVAIGLAIGGFLWALFVF). Residues 47–65 (RRRRASAPISQWSPTRRPR) carry the Bipartite nuclear localization signal motif. Phosphoserine is present on residues Ser87, Ser90, Ser93, and Ser101.

Belongs to the MYCT1 family. Highly expressed in lung, heart, and skeletal muscle. Expressed in brain, eye, liver, kidney, smooth muscle, pancreas, thyroid, thymus, submaxillary gland, spleen, testis, ovary, prostate, epididymis, and uterus. Deregulated expression promotes apoptosis in response to growth factor deprivation. Overexpression in synergy with CCNB1 may promote genomic instability.

Its subcellular location is the nucleus membrane. In terms of biological role, may regulate certain MYC target genes, MYC seems to be a direct upstream transcriptional activator. Does not seem to significantly affect growth cell capacity. Overexpression seems to mediate many of the known phenotypic features associated with MYC, including promotion of apoptosis, alteration of morphology, enhancement of anchorage-independent growth, tumorigenic conversion, promotion of genomic instability and inhibition of hematopoietic differentiation. This is Myc target protein 1 (Myct1) from Mus musculus (Mouse).